We begin with the raw amino-acid sequence, 392 residues long: S-adenosylmethionine synthase (392 aa).

His-17 provides a ligand contact to ATP. Residue Asp-19 participates in Mg(2+) binding. K(+) is bound at residue Glu-45. L-methionine contacts are provided by Glu-58 and Gln-102. The tract at residues 102-112 (QSADIAQGVDA) is flexible loop. Residues 169 to 171 (DAK), 235 to 236 (KF), Asp-244, 250 to 251 (RK), Ala-267, and Lys-271 each bind ATP. Position 244 (Asp-244) interacts with L-methionine. Lys-275 is an L-methionine binding site.

It belongs to the AdoMet synthase family. As to quaternary structure, homotetramer; dimer of dimers. It depends on Mg(2+) as a cofactor. K(+) is required as a cofactor.

The protein localises to the cytoplasm. It catalyses the reaction L-methionine + ATP + H2O = S-adenosyl-L-methionine + phosphate + diphosphate. Its pathway is amino-acid biosynthesis; S-adenosyl-L-methionine biosynthesis; S-adenosyl-L-methionine from L-methionine: step 1/1. Catalyzes the formation of S-adenosylmethionine (AdoMet) from methionine and ATP. The overall synthetic reaction is composed of two sequential steps, AdoMet formation and the subsequent tripolyphosphate hydrolysis which occurs prior to release of AdoMet from the enzyme. In Methylobacterium nodulans (strain LMG 21967 / CNCM I-2342 / ORS 2060), this protein is S-adenosylmethionine synthase.